Reading from the N-terminus, the 387-residue chain is Succinate--CoA ligase [ADP-forming] subunit beta (387 aa).

Residues Lys46, 53 to 55, Glu99, Ala102, and Glu107 each bind ATP; that span reads GRG. 2 residues coordinate Mg(2+): Asn199 and Asp213. Residues Asn264 and 321–323 contribute to the substrate site; that span reads GIV.

This sequence belongs to the succinate/malate CoA ligase beta subunit family. In terms of assembly, heterotetramer of two alpha and two beta subunits. Mg(2+) serves as cofactor.

The catalysed reaction is succinate + ATP + CoA = succinyl-CoA + ADP + phosphate. The enzyme catalyses GTP + succinate + CoA = succinyl-CoA + GDP + phosphate. Its pathway is carbohydrate metabolism; tricarboxylic acid cycle; succinate from succinyl-CoA (ligase route): step 1/1. Its function is as follows. Succinyl-CoA synthetase functions in the citric acid cycle (TCA), coupling the hydrolysis of succinyl-CoA to the synthesis of either ATP or GTP and thus represents the only step of substrate-level phosphorylation in the TCA. The beta subunit provides nucleotide specificity of the enzyme and binds the substrate succinate, while the binding sites for coenzyme A and phosphate are found in the alpha subunit. This Campylobacter jejuni subsp. jejuni serotype O:23/36 (strain 81-176) protein is Succinate--CoA ligase [ADP-forming] subunit beta.